The primary structure comprises 123 residues: Small ribosomal subunit protein uS12 (123 aa).

A 3-methylthioaspartic acid modification is found at D89.

Belongs to the universal ribosomal protein uS12 family. As to quaternary structure, part of the 30S ribosomal subunit. Contacts proteins S8 and S17. May interact with IF1 in the 30S initiation complex.

With S4 and S5 plays an important role in translational accuracy. Its function is as follows. Interacts with and stabilizes bases of the 16S rRNA that are involved in tRNA selection in the A site and with the mRNA backbone. Located at the interface of the 30S and 50S subunits, it traverses the body of the 30S subunit contacting proteins on the other side and probably holding the rRNA structure together. The combined cluster of proteins S8, S12 and S17 appears to hold together the shoulder and platform of the 30S subunit. In Rhodospirillum centenum (strain ATCC 51521 / SW), this protein is Small ribosomal subunit protein uS12.